Consider the following 198-residue polypeptide: WYSGMFAPNIKQEPISHHHHHHHAHHSHHQHPHDSNSNSNASSPHQSPLPSPNPPSNTILQLEQYLKQQQQQQQQQQQQQQQQPMDTLCAAAMTPSPSNNDQNSPLMLPGLPNPMQSIMLANLRPSPTATTTTTTPAAAPTTTAAAIALQANDKLQALTPPMDVTPPKSPAKSQQSCAEPEKEHDLMSNSSEDMKYMA.

2 disordered regions span residues 16 to 117 (SHHH…PMQS) and 152 to 198 (NDKL…KYMA). Residues 17-31 (HHHHHHHAHHSHHQH) show a composition bias toward basic residues. Composition is skewed to low complexity over residues 35-46 (SNSNSNASSPHQ) and 68-83 (QQQQQQQQQQQQQQQQ). A compositionally biased stretch (polar residues) spans 95 to 105 (PSPSNNDQNSP). Residues 179 to 198 (EPEKEHDLMSNSSEDMKYMA) are compositionally biased toward basic and acidic residues.

Belongs to the hunchback C2H2-type zinc-finger protein family.

The protein resides in the nucleus. In terms of biological role, gap class segmentation protein that controls development of head structures. The chain is Protein hunchback (hb) from Drosophila disjuncta (Fruit fly).